Reading from the N-terminus, the 161-residue chain is Allophycocyanin alpha chain (161 aa).

An N4-methylasparagine modification is found at N71. C81 provides a ligand contact to (2R,3E)-phycocyanobilin.

It belongs to the phycobiliprotein family. Component of the phycobilisome. Heterodimer of an alpha and a beta chain. Post-translationally, contains one covalently linked phycocyanobilin chromophore.

It is found in the cellular thylakoid membrane. In terms of biological role, light-harvesting photosynthetic bile pigment-protein from the phycobiliprotein complex. Allophycocyanin has a maximum absorption at approximately 650 nanometers. This is Allophycocyanin alpha chain (apcA) from Arthrospira platensis (Spirulina platensis).